The primary structure comprises 294 residues: Nucleotide-binding protein CLK_2809 (294 aa).

8–15 (GLSGAGKT) is an ATP binding site. 59–62 (DIRG) contacts GTP.

The protein belongs to the RapZ-like family.

In terms of biological role, displays ATPase and GTPase activities. This Clostridium botulinum (strain Loch Maree / Type A3) protein is Nucleotide-binding protein CLK_2809.